The primary structure comprises 131 residues: Holin-like protein CidA (131 aa).

Helical transmembrane passes span 4-24, 30-50, 65-85, and 88-108; these read VQLIIKLLLQLGIIIVITYIG, IFHLPLAGSIVGLFLFYLLLQ, FLLKTMVFFFIPSVVGIMDVA, and ITLNYILFFAVIIIGTCIVAL.

Belongs to the CidA/LrgA family. CidA subfamily.

Its subcellular location is the cell membrane. In terms of biological role, increases the activity of extracellular murein hydrolases possibly by mediating their export via hole formation. Inhibited by the antiholin-like proteins LrgAB. In an unstressed cell, the LrgAB products probably inhibit the function of the CidAB proteins. When a cell is stressed by the addition of antibiotics or by other factors in the environment, the CidAB proteins possibly oligomerize within the bacterial cell membrane, creating lesions that disrupt the proton motive force, which in turn results in loss of cell viability. These lesions are also hypothesized to regulate the subsequent cell lysis by either allowing the murein hydrolases access to the cell wall substrate and/or regulating their activity by a possible change in the cell wall pH that results from loss of membrane potential. The protein is Holin-like protein CidA of Staphylococcus aureus (strain Mu3 / ATCC 700698).